Consider the following 198-residue polypeptide: Nucleoid occlusion factor SlmA (198 aa).

Positions 10–70 (NRREEILQSL…SLIEFIEDSL (61 aa)) constitute an HTH tetR-type domain. Residues 33–52 (TTAKLAASVGVSEAALYRHF) constitute a DNA-binding region (H-T-H motif). The stretch at 117–144 (EQDRLQGRINQLFERIEAQLRQVLREKR) forms a coiled coil.

The protein belongs to the nucleoid occlusion factor SlmA family. In terms of assembly, homodimer. Interacts with FtsZ.

Its subcellular location is the cytoplasm. It localises to the nucleoid. In terms of biological role, required for nucleoid occlusion (NO) phenomenon, which prevents Z-ring formation and cell division over the nucleoid. Acts as a DNA-associated cell division inhibitor that binds simultaneously chromosomal DNA and FtsZ, and disrupts the assembly of FtsZ polymers. SlmA-DNA-binding sequences (SBS) are dispersed on non-Ter regions of the chromosome, preventing FtsZ polymerization at these regions. The sequence is that of Nucleoid occlusion factor SlmA from Salmonella dublin (strain CT_02021853).